The following is a 177-amino-acid chain: Large ribosomal subunit protein uL6 (177 aa).

This sequence belongs to the universal ribosomal protein uL6 family. As to quaternary structure, part of the 50S ribosomal subunit.

Functionally, this protein binds to the 23S rRNA, and is important in its secondary structure. It is located near the subunit interface in the base of the L7/L12 stalk, and near the tRNA binding site of the peptidyltransferase center. This Proteus mirabilis (strain HI4320) protein is Large ribosomal subunit protein uL6.